The sequence spans 242 residues: Zinc-finger homeodomain protein 13 (242 aa).

Residues 64-111 (YYECRKNHAADIGTTAYDGCGEFVSSTGEEDSLNCAACGCHRNFHREE) form a ZF-HD dimerization-type; degenerate zinc finger. Positions 144–166 (GGKSEGKKKKKEKESYGGDPIIK) are disordered. The span at 155–166 (EKESYGGDPIIK) shows a compositional bias: basic and acidic residues. The segment at residues 179 to 238 (VKRLKTKFTAEQTEKMRDYAEKLRWKVRPERQEEVEEFCVEIGVNRKNFRIWMNNHKDKI) is a DNA-binding region (homeobox).

Homo- and heterodimer with other ZFHD proteins. Interacts with MIF1, MIF2 and MIF3; these interactions prevent nuclear localization and DNA-binding to inhibit transcription regulation activity. Binds to ZHD11. Mostly expressed in flowers.

It localises to the nucleus. Its function is as follows. Putative transcription factor. The protein is Zinc-finger homeodomain protein 13 (ZHD13) of Arabidopsis thaliana (Mouse-ear cress).